The primary structure comprises 153 residues: Nucleoside diphosphate kinase (153 aa).

6 residues coordinate ATP: Lys-11, Phe-59, Arg-87, Thr-93, Arg-104, and Asn-114. The active-site Pros-phosphohistidine intermediate is the His-117.

The protein belongs to the NDK family. Requires Mg(2+) as cofactor.

The catalysed reaction is a 2'-deoxyribonucleoside 5'-diphosphate + ATP = a 2'-deoxyribonucleoside 5'-triphosphate + ADP. It catalyses the reaction a ribonucleoside 5'-diphosphate + ATP = a ribonucleoside 5'-triphosphate + ADP. In terms of biological role, major role in the synthesis of nucleoside triphosphates other than ATP. The ATP gamma phosphate is transferred to the NDP beta phosphate via a ping-pong mechanism, using a phosphorylated active-site intermediate. The chain is Nucleoside diphosphate kinase (swoH) from Emericella nidulans (strain FGSC A4 / ATCC 38163 / CBS 112.46 / NRRL 194 / M139) (Aspergillus nidulans).